The primary structure comprises 213 residues: StAR-related lipid transfer protein 5 (213 aa).

An START domain is found at 1 to 213; it reads MDLATAAQVS…LEKAVKKFFG (213 aa).

In terms of biological role, may be involved in the intracellular transport of sterols or other lipids. May bind cholesterol or other sterols. This chain is StAR-related lipid transfer protein 5 (STARD5), found in Bos taurus (Bovine).